A 190-amino-acid polypeptide reads, in one-letter code: Segregation and condensation protein B (190 aa).

This sequence belongs to the ScpB family. Homodimer. Homodimerization may be required to stabilize the binding of ScpA to the Smc head domains. Component of a cohesin-like complex composed of ScpA, ScpB and the Smc homodimer, in which ScpA and ScpB bind to the head domain of Smc. The presence of the three proteins is required for the association of the complex with DNA.

It is found in the cytoplasm. Its function is as follows. Participates in chromosomal partition during cell division. May act via the formation of a condensin-like complex containing Smc and ScpA that pull DNA away from mid-cell into both cell halves. In Bacillus cereus (strain ZK / E33L), this protein is Segregation and condensation protein B.